The chain runs to 442 residues: Tubulin beta chain (442 aa).

8 residues coordinate GTP: Gln11, Glu69, Ser138, Gly142, Thr143, Gly144, Asn204, and Asn226. Glu69 is a Mg(2+) binding site.

This sequence belongs to the tubulin family. In terms of assembly, dimer of alpha and beta chains. A typical microtubule is a hollow water-filled tube with an outer diameter of 25 nm and an inner diameter of 15 nM. Alpha-beta heterodimers associate head-to-tail to form protofilaments running lengthwise along the microtubule wall with the beta-tubulin subunit facing the microtubule plus end conferring a structural polarity. Microtubules usually have 13 protofilaments but different protofilament numbers can be found in some organisms and specialized cells. Mg(2+) serves as cofactor.

The protein resides in the cytoplasm. It localises to the cytoskeleton. Tubulin is the major constituent of microtubules, a cylinder consisting of laterally associated linear protofilaments composed of alpha- and beta-tubulin heterodimers. Microtubules grow by the addition of GTP-tubulin dimers to the microtubule end, where a stabilizing cap forms. Below the cap, tubulin dimers are in GDP-bound state, owing to GTPase activity of alpha-tubulin. The sequence is that of Tubulin beta chain (TUB-B) from Pneumocystis carinii.